The sequence spans 248 residues: Something about silencing protein 5 (248 aa).

One can recognise a YEATS domain in the interval 1–139 (MDHSIEVTFR…SELSKYFDLP (139 aa)). Ser144 carries the phosphoserine modification. The disordered stretch occupies residues 223–248 (TKQERTNFGSDAIHKDEPVKAHNKLK).

Component of the SAS complex, at least composed of SAS2, SAS4 and SAS5. These three proteins constitute the core of the complex, and are sufficient to acetylate histones.

It localises to the nucleus. Component of the SAS complex, a multiprotein complex that acetylates 'Lys-16' of histone H4 and 'Lys-14' of histone H3. The SAS complex is however unable to acetylate nucleosomal histones. The complex is involved in transcriptional silencing at telomeres and at HML locus. Also involved in rDNA silencing. In the complex, SAS5 is required for maximal histone acetyltransferase (HAT) activity of the complex, suggesting that it may be required to stabilize the complex or help in substrate recognition. In Saccharomyces cerevisiae (strain ATCC 204508 / S288c) (Baker's yeast), this protein is Something about silencing protein 5 (SAS5).